We begin with the raw amino-acid sequence, 166 residues long: Regulatory protein RecX (166 aa).

Belongs to the RecX family.

Its subcellular location is the cytoplasm. Its function is as follows. Modulates RecA activity. This is Regulatory protein RecX from Escherichia coli (strain SMS-3-5 / SECEC).